A 731-amino-acid chain; its full sequence is Alpha-catulin (731 aa).

2 positions are modified to phosphoserine: Ser373 and Ser537. Positions 535-559 are disordered; sequence HLSLPKPTKNSANLKSLKPDKPDSE.

Belongs to the vinculin/alpha-catenin family. In terms of assembly, interacts with ARHGEF1. Interacts with Dtna. The interaction is required for correct localization of both Ctnnal1 and Dtna.

Its subcellular location is the cytoplasm. The protein resides in the cytoskeleton. The protein localises to the cell membrane. Functionally, may modulate the Rho pathway signaling by providing a scaffold for the Lbc Rho guanine nucleotide exchange factor (ARHGEF1). The sequence is that of Alpha-catulin (Ctnnal1) from Mus musculus (Mouse).